Consider the following 409-residue polypeptide: Pentatricopeptide repeat-containing protein At5g09450, mitochondrial (409 aa).

The N-terminal 38 residues, 1–38 (MATRSLFHSLRCRLTNNGVLGSNFIRNAESSRFSKSYN), are a transit peptide targeting the mitochondrion. PPR repeat units lie at residues 155 to 189 (TAET…DSLT), 191 to 225 (GAIT…KVSP), 226 to 256 (DIFT…MRHD), 262 to 296 (GWVR…SISQ), 298 to 332 (EWIT…NQIL), and 333 to 367 (SSRS…KTTE).

This sequence belongs to the PPR family. P subfamily.

Its subcellular location is the mitochondrion. The polypeptide is Pentatricopeptide repeat-containing protein At5g09450, mitochondrial (Arabidopsis thaliana (Mouse-ear cress)).